The sequence spans 482 residues: ATP synthase subunit beta (482 aa).

Residue 167–174 participates in ATP binding; it reads GGAGVGKT.

It belongs to the ATPase alpha/beta chains family. In terms of assembly, F-type ATPases have 2 components, CF(1) - the catalytic core - and CF(0) - the membrane proton channel. CF(1) has five subunits: alpha(3), beta(3), gamma(1), delta(1), epsilon(1). CF(0) has three main subunits: a(1), b(2) and c(9-12). The alpha and beta chains form an alternating ring which encloses part of the gamma chain. CF(1) is attached to CF(0) by a central stalk formed by the gamma and epsilon chains, while a peripheral stalk is formed by the delta and b chains.

It localises to the cell membrane. It catalyses the reaction ATP + H2O + 4 H(+)(in) = ADP + phosphate + 5 H(+)(out). Its function is as follows. Produces ATP from ADP in the presence of a proton gradient across the membrane. The catalytic sites are hosted primarily by the beta subunits. The protein is ATP synthase subunit beta of Corynebacterium aurimucosum (strain ATCC 700975 / DSM 44827 / CIP 107346 / CN-1) (Corynebacterium nigricans).